Reading from the N-terminus, the 252-residue chain is Short chain dehydrogenase andC (252 aa).

An N-terminal signal peptide occupies residues Met1–Ala25. 3 residues coordinate NADP(+): Ile11, Asp57, and Arg119. Residue Ser137 is the Proton donor of the active site. Tyr151 and Lys155 together coordinate NADP(+). The Proton acceptor role is filled by Tyr151. Lys155 functions as the Lowers pKa of active site Tyr in the catalytic mechanism.

This sequence belongs to the short-chain dehydrogenases/reductases (SDR) family.

It participates in secondary metabolite biosynthesis; terpenoid biosynthesis. Functionally, short chain dehydrogenase; part of the gene cluster that mediates the biosynthesis of anditomin, a fungal meroterpenoid. The first step of the pathway is the synthesis of 3,5-dimethylorsellinic acid (DMOA) by the polyketide synthase andM. DMOA is then converted to the phthalide compound 5,7-dihydroxy-4,6-dimethylphthalide (DHDMP) by the cytochrome P450 monooxygenase andK, which is further prenylated by the prenyltransferase andD to yield farnesyl-DHDMP. Further epoxidation by the FAD-dependent monooxygenase andE leads to epoxyfarnesyl-DHDMP. The next step involves the terpene cyclase andB that converts epoxyfarnesyl-DHDMP into preandiloid A through opening of the epoxide ring followed by the cyclization of the farnesyl moiety. Preandiloid A is in turn oxidized at the C-3 hydroxyl group to yield preandiloid B by the dehydrogenase andC. The dioxygenase andA is solely responsible for the dehydrogenation of preandiloid B leading to the enone preandiloid C, as well as for the intriguing structural rearrangement to generate the bicyclo[2.2.2]octane core, transforming preandiloid C into andiconin. FAD-binding monooxygenase andJ then produces andilesin D which is reduced by dehydrogenase andI to yield andilesin A. Action of acetyltransferase andG followed by a spontaneous acetate elimination leads then to andilesin B, which is in turn substrate of the short chain dehydrogenase andH to yield andilesin C. Finally, the dioxygenase andF catalyzes the transformation of andilesin C to anditomin. This chain is Short chain dehydrogenase andC, found in Emericella variicolor (Aspergillus stellatus).